Consider the following 359-residue polypeptide: uncharacterized protein (359 aa).

Residue 46-53 (GPKSSGKS) participates in ATP binding.

This sequence belongs to the archaeal ATPase family.

This is an uncharacterized protein from Methanocaldococcus jannaschii (strain ATCC 43067 / DSM 2661 / JAL-1 / JCM 10045 / NBRC 100440) (Methanococcus jannaschii).